The sequence spans 314 residues: Phosphoribosylaminoimidazole-succinocarboxamide synthase (314 aa).

This sequence belongs to the SAICAR synthetase family.

It carries out the reaction 5-amino-1-(5-phospho-D-ribosyl)imidazole-4-carboxylate + L-aspartate + ATP = (2S)-2-[5-amino-1-(5-phospho-beta-D-ribosyl)imidazole-4-carboxamido]succinate + ADP + phosphate + 2 H(+). The protein operates within purine metabolism; IMP biosynthesis via de novo pathway; 5-amino-1-(5-phospho-D-ribosyl)imidazole-4-carboxamide from 5-amino-1-(5-phospho-D-ribosyl)imidazole-4-carboxylate: step 1/2. This chain is Phosphoribosylaminoimidazole-succinocarboxamide synthase, found in Bacteroides thetaiotaomicron (strain ATCC 29148 / DSM 2079 / JCM 5827 / CCUG 10774 / NCTC 10582 / VPI-5482 / E50).